The primary structure comprises 513 residues: 2-isopropylmalate synthase (513 aa).

Residues 5-268 (LIIFDTTLRD…EVGIDTTQIV (264 aa)) form the Pyruvate carboxyltransferase domain. The Mn(2+) site is built by D14, H202, H204, and N239. The segment at 394–513 (RLLSLEQQSA…SKNERVAAQG (120 aa)) is regulatory domain.

The protein belongs to the alpha-IPM synthase/homocitrate synthase family. LeuA type 1 subfamily. In terms of assembly, homodimer. It depends on Mn(2+) as a cofactor.

It is found in the cytoplasm. The enzyme catalyses 3-methyl-2-oxobutanoate + acetyl-CoA + H2O = (2S)-2-isopropylmalate + CoA + H(+). It participates in amino-acid biosynthesis; L-leucine biosynthesis; L-leucine from 3-methyl-2-oxobutanoate: step 1/4. Its function is as follows. Catalyzes the condensation of the acetyl group of acetyl-CoA with 3-methyl-2-oxobutanoate (2-ketoisovalerate) to form 3-carboxy-3-hydroxy-4-methylpentanoate (2-isopropylmalate). The chain is 2-isopropylmalate synthase from Methylibium petroleiphilum (strain ATCC BAA-1232 / LMG 22953 / PM1).